The following is a 129-amino-acid chain: Small ribosomal subunit protein uS12 (129 aa).

At Asp89 the chain carries 3-methylthioaspartic acid. Residues 110–129 form a disordered region; the sequence is RKQGRSRYGAPRKQVVATKK.

This sequence belongs to the universal ribosomal protein uS12 family. As to quaternary structure, part of the 30S ribosomal subunit. Contacts proteins S8 and S17. May interact with IF1 in the 30S initiation complex.

Its function is as follows. With S4 and S5 plays an important role in translational accuracy. Interacts with and stabilizes bases of the 16S rRNA that are involved in tRNA selection in the A site and with the mRNA backbone. Located at the interface of the 30S and 50S subunits, it traverses the body of the 30S subunit contacting proteins on the other side and probably holding the rRNA structure together. The combined cluster of proteins S8, S12 and S17 appears to hold together the shoulder and platform of the 30S subunit. The chain is Small ribosomal subunit protein uS12 from Rickettsia bellii (strain OSU 85-389).